Here is a 394-residue protein sequence, read N- to C-terminus: Elongation factor Tu (394 aa).

The tr-type G domain maps to 10-204 (KPHVNIGTIG…AVDEYIPTPD (195 aa)). Residues 19–26 (GHIDHGKT) form a G1 region. Residue 19 to 26 (GHIDHGKT) coordinates GTP. Residue T26 coordinates Mg(2+). Residues 60–64 (GITIN) are G2. The interval 81–84 (DCPG) is G3. Residues 81–85 (DCPGH) and 136–139 (NKCD) contribute to the GTP site. The interval 136 to 139 (NKCD) is G4. Residues 174–176 (SAL) are G5.

It belongs to the TRAFAC class translation factor GTPase superfamily. Classic translation factor GTPase family. EF-Tu/EF-1A subfamily. In terms of assembly, monomer.

The protein resides in the cytoplasm. It carries out the reaction GTP + H2O = GDP + phosphate + H(+). In terms of biological role, GTP hydrolase that promotes the GTP-dependent binding of aminoacyl-tRNA to the A-site of ribosomes during protein biosynthesis. The chain is Elongation factor Tu from Mycoplasmoides gallisepticum (strain R(low / passage 15 / clone 2)) (Mycoplasma gallisepticum).